Consider the following 118-residue polypeptide: Fluoride-specific ion channel FluC 1 (118 aa).

2 consecutive transmembrane segments (helical) span residues 5-25 (FLLV…ISVL) and 47-67 (FLLG…FLGT). Na(+)-binding residues include G71 and T74. The helical transmembrane segment at 98–118 (YLGFTYVFGLIAAFLGMMLGV) threads the bilayer.

It belongs to the fluoride channel Fluc/FEX (TC 1.A.43) family.

The protein resides in the cell membrane. It carries out the reaction fluoride(in) = fluoride(out). Na(+) is not transported, but it plays an essential structural role and its presence is essential for fluoride channel function. Functionally, fluoride-specific ion channel. Important for reducing fluoride concentration in the cell, thus reducing its toxicity. This chain is Fluoride-specific ion channel FluC 1, found in Listeria monocytogenes serovar 1/2a (strain ATCC BAA-679 / EGD-e).